We begin with the raw amino-acid sequence, 1299 residues long: Sophorolipid transporter (1299 aa).

The Cytoplasmic portion of the chain corresponds to 1–64; the sequence is MVDDIQVEKR…FCTPLDVFLE (64 aa). The helical transmembrane segment at 65–85 threads the bilayer; it reads ILALFFAAVHGAALPMFTLVV. Residues 65 to 356 enclose the ABC transmembrane type-1 1 domain; the sequence is ILALFFAAVH…IAPNVRFLVK (292 aa). Topologically, residues 86–114 are extracellular; it reads GAIFNTFRDFTSYDLKGNEFQHKVNHLSL. The helical transmembrane segment at 115-135 threads the bilayer; it reads YFVYIGIGMLGSAFLESFLLV. The Cytoplasmic portion of the chain corresponds to 136–187; the sequence is DRGEVLAGRYRKHYLSAVIRQNIAFYDKLGGGEVSTRIINDTNSIQEAISDK. A helical membrane pass occupies residues 188 to 208; sequence LGNVVQGIASFIAATVISFAS. Topologically, residues 209–214 are extracellular; it reads QWKLAC. A helical membrane pass occupies residues 215 to 235; sequence ILLSAVGFMVITMGTGATFMA. Topologically, residues 236 to 293 are cytoplasmic; that stretch reads KYQLRSDAIYSQSGATVAEEALSAVRTTVAFGAQPHLAVKYEKVLDRVVKESKRSSYS. A helical transmembrane segment spans residues 294-314; sequence LGVMLACIWASTFWVYALALW. The Extracellular portion of the chain corresponds to 315–326; it reads QGSREIVSGSAD. A helical transmembrane segment spans residues 327–347; it reads VGKIIVVITAMLLGSFQLGNI. The Cytoplasmic portion of the chain corresponds to 348–725; the sequence is APNVRFLVKG…WGLNRKEWGY (378 aa). Residues 393–638 enclose the ABC transporter 1 domain; it reads IELKNVKFRY…EGPYKALVDA (246 aa). 428 to 435 provides a ligand contact to ATP; sequence GASGSGKS. Residues 681–690 show a composition bias toward polar residues; the sequence is SAGTQTTQPP. The tract at residues 681–703 is disordered; that stretch reads SAGTQTTQPPEYQENDIPGVRNP. Residues 726-746 traverse the membrane as a helical segment; sequence ILIGSLASIILGYCYPAMAII. The ABC transmembrane type-1 2 domain maps to 727–1016; it reads LIGSLASIIL…IFSYAPNMNS (290 aa). The Extracellular portion of the chain corresponds to 747–769; sequence TGQTTGSMVLPPSEYGKMRHVVN. Residues 770 to 790 traverse the membrane as a helical segment; that stretch reads IMGWWYFFVGCISFMTAFITI. The Cytoplasmic segment spans residues 791–848; sequence AALSLASDKLVKNIRLALFRQLMRMDIAFFDHKNNTPGALTSILAKEAKMIEGLSGAT. A helical membrane pass occupies residues 849-869; sequence LGQIQQSLVTLIGGIVTGIPF. Residues 870–874 are Extracellular-facing; the sequence is NWRIG. A helical transmembrane segment spans residues 875–895; the sequence is LVATSVVPVMLVCGFVRVWVL. Over 896-954 the chain is Cytoplasmic; the sequence is TQLSDRAREVYERSGSMASEYTSAVRTVQSLTRELDVVVKYTKTVDSQIFSSRIAIARS. A helical transmembrane segment spans residues 955 to 975; it reads ALYYALSEGMTPWVVALVFWW. The Extracellular segment spans residues 976–987; sequence GSTVMRRGEASV. Residues 988–1008 form a helical membrane-spanning segment; the sequence is AGYMTVFMAIITGSQAAGQIF. Topologically, residues 1009-1299 are cytoplasmic; it reads SYAPNMNSAK…LVNLQGLGEI (291 aa). The ABC transporter 2 domain occupies 1053–1293; it reads IEFRHVNFRY…NGWYAELVNL (241 aa). ATP is bound at residue 1088–1095; the sequence is GASGCGKS.

It belongs to the ABC transporter superfamily. ABCB family. Multidrug resistance exporter (TC 3.A.1.201) subfamily.

The protein localises to the cell membrane. In terms of biological role, transports acidic acylated and non-acylated sophorolipids (SLs) into the extracellular space, where they can be lactonized by lactone esterase. This chain is Sophorolipid transporter (mdr), found in Starmerella bombicola (Yeast).